Consider the following 708-residue polypeptide: E3 ubiquitin-protein ligase Praja-2 (708 aa).

The span at 1–10 shows a compositional bias: basic and acidic residues; sequence MSQYTEKEPA. Disordered regions lie at residues 1 to 30 and 53 to 90; these read MSQY…GYQT and ERSL…SSLP. At serine 2 the chain carries N-acetylserine. Residues 74-90 are compositionally biased toward polar residues; that stretch reads ENSSGSSPLDQVDSSLP. Serine 196 bears the Phosphoserine mark. 3 disordered regions span residues 244 to 342, 385 to 411, and 425 to 495; these read GDTE…KQRS, TQRE…DNPF, and DEDS…QTSL. The residue at position 246 (threonine 246) is a Phosphothreonine. A compositionally biased stretch (polar residues) spans 249 to 276; it reads VHQNSQEIQRSSQDEMVSTKQQNNTSQE. Phosphoserine is present on residues serine 253, serine 309, and serine 323. Positions 322–332 are enriched in polar residues; sequence ISSSQVDQETG. Over residues 333–342 the composition is skewed to basic and acidic residues; that stretch reads FNRHEAKQRS. Serine 342 bears the Phosphoserine; by PKA mark. Threonine 389 carries the post-translational modification Phosphothreonine; by PKA. The residue at position 432 (serine 432) is a Phosphoserine. A compositionally biased stretch (acidic residues) spans 467–483; sequence NEPELQSDSSGPEEENQ. Residues 484–493 show a composition bias toward polar residues; the sequence is ELSLQEGEQT. The tract at residues 531–708 is interaction with PRKAR1A, PRKAR2A and PRKAR2B; that stretch reads DGNNNLEDDS…PSNDSIAEAP (178 aa). The mediates interaction with TBC1D31 stretch occupies residues 550 to 570; it reads WSLFDGFADGLGVAEAISYVD. Residues 634–675 form an RING-type; atypical zinc finger; the sequence is CPICCSEYIKDDIATELPCHHFFHKPCVSIWLQKSGTCPVCR. Residues 685 to 708 are disordered; it reads ASAAPSSEPDPDAPPSNDSIAEAP. Positions 699-708 are enriched in low complexity; that stretch reads PSNDSIAEAP.

In terms of assembly, binds ubiquitin-conjugating enzymes (E2s). In vitro, interacts with the ubiquitin-conjugating enzyme, UBE2D2. The phosphorylated form interacts with PRKAR1A, PRKAR2A and PRKAR2B. Binds the catalytic subunits of cAMP-dependent protein kinase. Interacts with MFHAS1. Interacts with TBC1D31; the interaction is direct and recruits PJA2 to centrosomes.

It is found in the cytoplasm. Its subcellular location is the cell membrane. The protein localises to the endoplasmic reticulum membrane. The protein resides in the golgi apparatus membrane. It localises to the synapse. It is found in the postsynaptic density. Its subcellular location is the cytoskeleton. The protein localises to the microtubule organizing center. The protein resides in the centrosome. It catalyses the reaction S-ubiquitinyl-[E2 ubiquitin-conjugating enzyme]-L-cysteine + [acceptor protein]-L-lysine = [E2 ubiquitin-conjugating enzyme]-L-cysteine + N(6)-ubiquitinyl-[acceptor protein]-L-lysine.. It functions in the pathway protein modification; protein ubiquitination. Functionally, has E2-dependent E3 ubiquitin-protein ligase activity. Responsible for ubiquitination of cAMP-dependent protein kinase type I and type II-alpha/beta regulatory subunits and for targeting them for proteasomal degradation. Essential for PKA-mediated long-term memory processes. Through the ubiquitination of MFHAS1, positively regulates the TLR2 signaling pathway that leads to the activation of the downstream p38 and JNK MAP kinases and promotes the polarization of macrophages toward the pro-inflammatory M1 phenotype. Plays a role in ciliogenesis by ubiquitinating OFD1. This chain is E3 ubiquitin-protein ligase Praja-2 (PJA2), found in Pongo abelii (Sumatran orangutan).